Reading from the N-terminus, the 95-residue chain is Aspartyl/glutamyl-tRNA(Asn/Gln) amidotransferase subunit C (95 aa).

The protein belongs to the GatC family. In terms of assembly, heterotrimer of A, B and C subunits.

The catalysed reaction is L-glutamyl-tRNA(Gln) + L-glutamine + ATP + H2O = L-glutaminyl-tRNA(Gln) + L-glutamate + ADP + phosphate + H(+). It catalyses the reaction L-aspartyl-tRNA(Asn) + L-glutamine + ATP + H2O = L-asparaginyl-tRNA(Asn) + L-glutamate + ADP + phosphate + 2 H(+). Its function is as follows. Allows the formation of correctly charged Asn-tRNA(Asn) or Gln-tRNA(Gln) through the transamidation of misacylated Asp-tRNA(Asn) or Glu-tRNA(Gln) in organisms which lack either or both of asparaginyl-tRNA or glutaminyl-tRNA synthetases. The reaction takes place in the presence of glutamine and ATP through an activated phospho-Asp-tRNA(Asn) or phospho-Glu-tRNA(Gln). This chain is Aspartyl/glutamyl-tRNA(Asn/Gln) amidotransferase subunit C, found in Cereibacter sphaeroides (strain ATCC 17023 / DSM 158 / JCM 6121 / CCUG 31486 / LMG 2827 / NBRC 12203 / NCIMB 8253 / ATH 2.4.1.) (Rhodobacter sphaeroides).